The following is a 275-amino-acid chain: MATKKFKPTSPGRRFVTVSDFREVTVTEPEKSLVEPLRKKAGRNFQGRVTVRHRGGGHKRLYRVIDFKRNKDGVPGKVATIEYDPNRSANIALVNYADGEKRYIVAPAGLKVGQEIMSGPQADIKVGNALPLRNIPPGVLIHNIELYPGHGARVVRSAGGSAQLMAKEGDYAHVRLPSGEVRLFPLDCRATIGQVGNVEHENIVIGKAGRARWLGIRPTVRGVVMNPVDHPHGGGEGRSPIGRPPVTPWGKPALGTRTRNKKKASSKLIVKRRTK.

The tract at residues 225–275 (MNPVDHPHGGGEGRSPIGRPPVTPWGKPALGTRTRNKKKASSKLIVKRRTK) is disordered. Residues 258-275 (TRNKKKASSKLIVKRRTK) show a composition bias toward basic residues.

It belongs to the universal ribosomal protein uL2 family. Part of the 50S ribosomal subunit. Forms a bridge to the 30S subunit in the 70S ribosome.

Functionally, one of the primary rRNA binding proteins. Required for association of the 30S and 50S subunits to form the 70S ribosome, for tRNA binding and peptide bond formation. It has been suggested to have peptidyltransferase activity; this is somewhat controversial. Makes several contacts with the 16S rRNA in the 70S ribosome. The polypeptide is Large ribosomal subunit protein uL2 (Desulforudis audaxviator (strain MP104C)).